We begin with the raw amino-acid sequence, 447 residues long: Polyamine export protein (447 aa).

Over methionine 1–serine 4 the chain is Cytoplasmic. Residues methionine 1–glutamate 197 form the CNNM transmembrane domain. A helical transmembrane segment spans residues isoleucine 5–leucine 25. The Periplasmic portion of the chain corresponds to alanine 26–proline 54. A helical membrane pass occupies residues glycine 55 to valine 75. Residues glycine 76 to glutamine 99 lie on the Cytoplasmic side of the membrane. Residues leucine 100 to threonine 120 traverse the membrane as a helical segment. Topologically, residues proline 121–arginine 141 are periplasmic. A helical transmembrane segment spans residues phenylalanine 142–phenylalanine 162. Over arginine 163–alanine 447 the chain is Cytoplasmic. CBS domains follow at residues methionine 216–methionine 275 and glutamine 282–glutamate 343.

It belongs to the UPF0053 family. PaeA subfamily.

It is found in the cell inner membrane. Its function is as follows. Involved in cadaverine and putrescine tolerance in stationary phase. May facilitate the efflux of both cadaverine and putrescine from the cytoplasm, reducing potentially toxic levels under certain stress conditions. This is Polyamine export protein from Salmonella typhimurium (strain 14028s / SGSC 2262).